Consider the following 460-residue polypeptide: Bifunctional protein GlmU (460 aa).

The interval 1 to 229 (MTNYAIILAA…FNESLGVNDR (229 aa)) is pyrophosphorylase. Residues 8 to 11 (LAAG), Lys22, Gln72, and 77 to 78 (GT) each bind UDP-N-acetyl-alpha-D-glucosamine. Asp102 is a Mg(2+) binding site. Residues Gly139, Glu154, Asn169, and Asn227 each contribute to the UDP-N-acetyl-alpha-D-glucosamine site. Asn227 is a Mg(2+) binding site. Residues 230 to 250 (VALATAETVMRQRITQKHMVN) form a linker region. An N-acetyltransferase region spans residues 251-460 (GVTFQNPETV…RLAHHPSRSK (210 aa)). UDP-N-acetyl-alpha-D-glucosamine-binding residues include Arg332 and Lys350. Catalysis depends on His362, which acts as the Proton acceptor. The UDP-N-acetyl-alpha-D-glucosamine site is built by Tyr365 and Asn376. Residues Ala379, 385-386 (NY), Ser404, Ala422, and Arg439 contribute to the acetyl-CoA site.

The protein in the N-terminal section; belongs to the N-acetylglucosamine-1-phosphate uridyltransferase family. It in the C-terminal section; belongs to the transferase hexapeptide repeat family. Homotrimer. It depends on Mg(2+) as a cofactor.

Its subcellular location is the cytoplasm. It carries out the reaction alpha-D-glucosamine 1-phosphate + acetyl-CoA = N-acetyl-alpha-D-glucosamine 1-phosphate + CoA + H(+). The catalysed reaction is N-acetyl-alpha-D-glucosamine 1-phosphate + UTP + H(+) = UDP-N-acetyl-alpha-D-glucosamine + diphosphate. The protein operates within nucleotide-sugar biosynthesis; UDP-N-acetyl-alpha-D-glucosamine biosynthesis; N-acetyl-alpha-D-glucosamine 1-phosphate from alpha-D-glucosamine 6-phosphate (route II): step 2/2. Its pathway is nucleotide-sugar biosynthesis; UDP-N-acetyl-alpha-D-glucosamine biosynthesis; UDP-N-acetyl-alpha-D-glucosamine from N-acetyl-alpha-D-glucosamine 1-phosphate: step 1/1. It functions in the pathway bacterial outer membrane biogenesis; LPS lipid A biosynthesis. Functionally, catalyzes the last two sequential reactions in the de novo biosynthetic pathway for UDP-N-acetylglucosamine (UDP-GlcNAc). The C-terminal domain catalyzes the transfer of acetyl group from acetyl coenzyme A to glucosamine-1-phosphate (GlcN-1-P) to produce N-acetylglucosamine-1-phosphate (GlcNAc-1-P), which is converted into UDP-GlcNAc by the transfer of uridine 5-monophosphate (from uridine 5-triphosphate), a reaction catalyzed by the N-terminal domain. This chain is Bifunctional protein GlmU, found in Streptococcus pyogenes serotype M12 (strain MGAS9429).